Here is a 1811-residue protein sequence, read N- to C-terminus: ADP-ribosylation factor guanine nucleotide-exchange factor sec71 (1811 aa).

Disordered regions lie at residues 1–108 (MTDL…TSEA) and 316–336 (INMN…PIPS). 3 stretches are compositionally biased toward basic and acidic residues: residues 33-49 (STIK…HDSI), 57-73 (KSIE…KDIE), and 80-91 (PPEDDLDSRSIE). S40 carries the phosphoserine modification. 2 stretches are compositionally biased toward polar residues: residues 92–108 (SEQT…TSEA) and 316–326 (INMNKSSSNGT). T326 bears the Phosphothreonine mark. 2 positions are modified to phosphoserine: S332 and S353. An HUS box motif is present at residues 533–537 (NYDCI). Residues 643–663 (TAKDDETESTSKGEEPQKSKS) are compositionally biased toward basic and acidic residues. The disordered stretch occupies residues 643 to 688 (TAKDDETESTSKGEEPQKSKSEPPSAGINSTSMDNLESSGQALATD). Over residues 669–688 (GINSTSMDNLESSGQALATD) the composition is skewed to polar residues. One can recognise an SEC7 domain in the interval 692–880 (QFENLKHRKK…TEVYEEIQKN (189 aa)). S741 is subject to Phosphoserine. A Phosphothreonine modification is found at T742. Position 812 (D812) interacts with Mg(2+). The tract at residues 889–1103 (DPTSNFPEIP…TTKPLRKSLD (215 aa)) is HDS1 domain.

It is found in the cytoplasm. The protein resides in the golgi apparatus. Its subcellular location is the trans-Golgi network. The protein localises to the cytoplasmic vesicle. It localises to the COPI-coated vesicle membrane. It is found in the COPII-coated vesicle membrane. Guanine exchange factor that acts as an activator of arf1 at the trans-Golgi net-work and is thus involved in vesicular budding and traffic between compartments of the Golgi apparatus. Activation of Arf (ADP-ribosylation factor) GTPases is essential for vesicle formation via recruitment of cargo adapters and coat proteins necessary for Golgi trafficking. Involved in tunicamycin-induced ER stress response and subsequent apoptosis. This Schizosaccharomyces pombe (strain 972 / ATCC 24843) (Fission yeast) protein is ADP-ribosylation factor guanine nucleotide-exchange factor sec71.